A 496-amino-acid chain; its full sequence is uncharacterized protein (496 aa).

Transmembrane regions (helical) follow at residues 33–53 (FLKG…LIFA), 89–109 (LNFL…YTLI), 127–147 (PWFV…FTFF), 154–174 (VFNL…YEIF), 193–213 (LIIA…TPLV), 247–267 (IILI…NTNF), 285–305 (LWFI…VFAY), 320–340 (LWVY…YMVF), 355–375 (LLNL…VTLF), 382–402 (SLIN…IYIF), 411–431 (LLVL…IVGF), and 455–475 (VQIM…YLTI).

It is found in the cell membrane. This is an uncharacterized protein from Ureaplasma parvum serovar 3 (strain ATCC 700970).